We begin with the raw amino-acid sequence, 94 residues long: Putative pterin-4-alpha-carbinolamine dehydratase (94 aa).

The protein belongs to the pterin-4-alpha-carbinolamine dehydratase family.

The catalysed reaction is (4aS,6R)-4a-hydroxy-L-erythro-5,6,7,8-tetrahydrobiopterin = (6R)-L-erythro-6,7-dihydrobiopterin + H2O. This Koribacter versatilis (strain Ellin345) protein is Putative pterin-4-alpha-carbinolamine dehydratase.